Reading from the N-terminus, the 472-residue chain is Sad1-interacting factor 3 (472 aa).

2 disordered regions span residues Met1–Gly47 and Ser197–Asp223. Topologically, residues Met1–Ser443 are lumenal. The span at Asn30 to His40 shows a compositional bias: polar residues. Residue Ser42 is modified to Phosphoserine. Residues Ile444–Ile464 traverse the membrane as a helical segment. Residues Leu465 to Arg472 are Cytoplasmic-facing.

This sequence belongs to the RMD1/sif2 family. As to quaternary structure, interacts with sad1.

It is found in the nucleus membrane. The sequence is that of Sad1-interacting factor 3 (sif3) from Schizosaccharomyces pombe (strain 972 / ATCC 24843) (Fission yeast).